A 217-amino-acid polypeptide reads, in one-letter code: UPF0319 protein VP1009 (217 aa).

An N-terminal signal peptide occupies residues 1-21 (MRLKTWIVAFFLGLFGTTVNA).

This sequence belongs to the UPF0319 family.

The protein is UPF0319 protein VP1009 of Vibrio parahaemolyticus serotype O3:K6 (strain RIMD 2210633).